We begin with the raw amino-acid sequence, 328 residues long: ABC transporter I family member 20 (328 aa).

One can recognise an ABC transporter domain in the interval 14 to 257 (VEISGLRFTY…SKKSLMRTVE (244 aa)). Position 55-62 (55-62 (GSNGAGKT)) interacts with ATP. The disordered stretch occupies residues 263–295 (ERDEERKRRKERKANGLPEFETRTEESRVTGDP). Residues 282–291 (FETRTEESRV) are compositionally biased toward basic and acidic residues.

It belongs to the ABC transporter superfamily. ABCI family.

The protein resides in the cytoplasm. The chain is ABC transporter I family member 20 (ABCI20) from Arabidopsis thaliana (Mouse-ear cress).